The chain runs to 654 residues: Probable protein phosphatase 2C 23 (654 aa).

Residues 11 to 30 form a disordered region; sequence CLTGGAGRNKKPELSILEPD. S147 is subject to Phosphoserine. The PPM-type phosphatase domain maps to 243 to 645; it reads DVSLESQNLQ…DDVSIVVISL (403 aa). Mn(2+) is bound by residues D280 and G281. Residues 309 to 336 are disordered; it reads DDPKTDAKSSDEADVENRDSSSEKKSKN. Mn(2+)-binding residues include D573 and D636.

Belongs to the PP2C family. The cofactor is Mg(2+). Mn(2+) serves as cofactor. As to expression, expressed in seedlings, roots, leaves, stems, young inflorescences, flowers and siliques.

Its subcellular location is the nucleus. The catalysed reaction is O-phospho-L-seryl-[protein] + H2O = L-seryl-[protein] + phosphate. It catalyses the reaction O-phospho-L-threonyl-[protein] + H2O = L-threonyl-[protein] + phosphate. Involved in leaf development regulation. The polypeptide is Probable protein phosphatase 2C 23 (PLL4) (Arabidopsis thaliana (Mouse-ear cress)).